The primary structure comprises 324 residues: Acetyl-coenzyme A carboxylase carboxyl transferase subunit alpha (324 aa).

The region spanning lysine 37–lysine 291 is the CoA carboxyltransferase C-terminal domain.

This sequence belongs to the AccA family. Acetyl-CoA carboxylase is a heterohexamer composed of biotin carboxyl carrier protein (AccB), biotin carboxylase (AccC) and two subunits each of ACCase subunit alpha (AccA) and ACCase subunit beta (AccD).

It localises to the cytoplasm. The catalysed reaction is N(6)-carboxybiotinyl-L-lysyl-[protein] + acetyl-CoA = N(6)-biotinyl-L-lysyl-[protein] + malonyl-CoA. The protein operates within lipid metabolism; malonyl-CoA biosynthesis; malonyl-CoA from acetyl-CoA: step 1/1. In terms of biological role, component of the acetyl coenzyme A carboxylase (ACC) complex. First, biotin carboxylase catalyzes the carboxylation of biotin on its carrier protein (BCCP) and then the CO(2) group is transferred by the carboxyltransferase to acetyl-CoA to form malonyl-CoA. The polypeptide is Acetyl-coenzyme A carboxylase carboxyl transferase subunit alpha (Chlamydia trachomatis serovar L2 (strain ATCC VR-902B / DSM 19102 / 434/Bu)).